Here is a 411-residue protein sequence, read N- to C-terminus: Thyroid hormone receptor beta (411 aa).

The segment at 1 to 24 (MTPNSMTENGLPAWDKPKPCPDGE) is disordered. Residues 1-104 (MTPNSMTENG…IPSYLDKDEL (104 aa)) form a modulating region. Residues 15 to 24 (DKPKPCPDGE) show a composition bias toward basic and acidic residues. The Zn(2+) site is built by Cys105, Cys108, Cys122, Cys125, Cys143, Cys149, Cys159, and Cys162. 2 NR C4-type zinc fingers span residues 105-125 (CVVCGDKATGYHYRCITCEGC) and 143-167 (CKYEGKCVIDKVTRNQCQECRFKKC). Positions 105-179 (CVVCGDKATG…VGMATDLVLD (75 aa)) form a DNA-binding region, nuclear receptor. Residues 215–411 (QEWELIKTVT…EHYINYRRNS (197 aa)) enclose the NR LBD domain. An interaction with NR2F6 region spans residues 242–411 (KFLPEDIGQA…EHYINYRRNS (170 aa)). Positions 280 and 329 each coordinate 3,3',5-triiodo-L-thyronine. 2 residues coordinate L-thyroxine: Arg280 and Asn329.

The protein belongs to the nuclear hormone receptor family. NR1 subfamily. Binds DNA as a dimer; homodimer and heterodimer with RXRA. Interacts with the coactivators NCOA1/SRC1, NCOA2/GRIP1, NCOA7 and MED1/TRAP220 in a ligand-inducible manner. Interacts with the corepressor NCOR1 in absence of ligand. Interacts with C1D. Interacts with NR2F6; the interaction impairs the binding of the THRB homodimer and THRB:RXRB heterodimer to T3 response elements. Interacts with PRMT2 and THRSP. Interacts with TACC1; this interaction is decreased in the presence of thyroid hormone T3.

Its subcellular location is the nucleus. In terms of biological role, nuclear hormone receptor that can act as a repressor or activator of transcription. High affinity receptor for thyroid hormones, including triiodothyronine and thyroxine. This is Thyroid hormone receptor beta (THRB) from Ovis aries (Sheep).